Here is a 249-residue protein sequence, read N- to C-terminus: DNA polymerase sliding clamp (249 aa).

It belongs to the PCNA family. As to quaternary structure, homotrimer which circularizes head-to-tail (head is a N-terminus, tail is at C-terminus) to form a toroid. RFC opens the toroid so it can load on DNA. Interacts with both Pol I (pol) and Pol II (polB-polC), with Hel308 (hjm) and with Hjc. Interaction with the C-terminal PIP-box of RfcL may stabilize the toroidal structure.

Its function is as follows. Sliding clamp subunit that acts as a moving platform for DNA processing. Responsible for tethering the catalytic subunit of DNA polymerase to DNA during high-speed replication. Unlike its eukaryotic paralog, loads on circular DNA without the replication factor C (RFC) clamp loader, although RFC greatly increases loading efficiency. Stimulates the ATPase activity of replication factor C (RFC) in the presence of ssDNA. Stimulates the helicase activity of Hel308 and may alter its substrate specificity. In Pyrococcus furiosus (strain ATCC 43587 / DSM 3638 / JCM 8422 / Vc1), this protein is DNA polymerase sliding clamp.